Here is a 79-residue protein sequence, read N- to C-terminus: Cell division protein ZapB (79 aa).

Residues 6 to 78 (FEKLEVKVQQ…LRALLGKMEE (73 aa)) are a coiled coil.

It belongs to the ZapB family. In terms of assembly, homodimer. The ends of the coiled-coil dimer bind to each other, forming polymers. Interacts with FtsZ.

It localises to the cytoplasm. Its function is as follows. Non-essential, abundant cell division factor that is required for proper Z-ring formation. It is recruited early to the divisome by direct interaction with FtsZ, stimulating Z-ring assembly and thereby promoting cell division earlier in the cell cycle. Its recruitment to the Z-ring requires functional FtsA or ZipA. The sequence is that of Cell division protein ZapB from Yersinia enterocolitica serotype O:8 / biotype 1B (strain NCTC 13174 / 8081).